The primary structure comprises 537 residues: MGKNEKTSLGRALVKHHNHMIQETKEKGKSYKDQHKKVLESVTEVSDIDAIIEQAEEAERLFAIHHDSATPVPINMDTGSSSSGITAKEWKEQRMREEALHASSLQVPRRPHWTPKMNVEKLDANEKQAFLTWRRKLASLEENEKLVLTPFEKNLDIWRQLWRVLERSDLIVMVVDARDPLFYRCPDLEAYAQEIDEHKKTMLLVNKADLLPSYVREKWAEYFSRNNILFVFWSAKAATATLEGKPLKEQWRAPDTTQKTDNPAVKVYGRDDLLDRLKLEALEIVKMRKSRGVSATSTESHCEQVVVGFVGYPNVGKSSTINALVGQKRTGVTSTPGKTKHFQTLIISEDLMLCDCPGLVFPSFSSSRYEMVASGVLPIDRMTEHLEAIKVVAELVPRHAIEDVYNISLPKPKSYEPQSRPPLASELLRTYCLSRGYVASSGLPDETRAARQILKDYIEGKLPHFAMPPEITRDDENETADDTLGAETREGSQTEKKGEEAPSLGLDQVLDDLSSFDLANGLVSSKTKQHKKSHRKQ.

One can recognise a CP-type G domain in the interval 158 to 362 (WRQLWRVLER…LCDCPGLVFP (205 aa)). The DARXP motif signature appears at 176 to 180 (DARDP). The tract at residues 206 to 209 (NKAD) is G4. GTP is bound at residue 206 to 209 (NKAD). The tract at residues 234-236 (SAK) is G5. Positions 311–318 (GYPNVGKS) are G1. A GTP-binding site is contributed by 314 to 319 (NVGKSS). The segment at 337–341 (GKTKH) is G2. Positions 355–358 (DCPG) are G3. Gly-358 lines the GTP pocket. Residues 484–508 (LGAETREGSQTEKKGEEAPSLGLDQ) are disordered. The segment covering 487-500 (ETREGSQTEKKGEE) has biased composition (basic and acidic residues).

Belongs to the TRAFAC class YlqF/YawG GTPase family. As to expression, ubiquitous, with the highest expression in stem and hypsophyll on day 66.

Its subcellular location is the cytoplasm. In terms of biological role, GTPase that might be redundant with LSG1-2 for ribosome biogenesis. Binds to 23S rRNA. The polypeptide is GTPase LSG1-1 (Arabidopsis thaliana (Mouse-ear cress)).